We begin with the raw amino-acid sequence, 163 residues long: uncharacterized protein (163 aa).

2 disordered regions span residues 1–78 (MHSL…NPHS) and 115–163 (PKWL…LPCH).

This is an uncharacterized protein from Homo sapiens (Human).